The chain runs to 97 residues: uncharacterized protein (97 aa).

Transmembrane regions (helical) follow at residues 7-27 (CIAPLIYLVFGVSSTWLIGLG), 34-54 (IPMLIISLCAFAYGFWLLMFS), and 69-89 (IVLYWIVFIVMIFFLTYPTIL).

The protein localises to the cell membrane. This is an uncharacterized protein from Haemophilus influenzae (strain ATCC 51907 / DSM 11121 / KW20 / Rd).